A 164-amino-acid chain; its full sequence is I-Kappa-B like protein F1 (164 aa).

ANK repeat units follow at residues 57-89 (HGRQ…NINA), 94-124 (TGNT…DLGA), and 128-157 (QQET…AYNN).

Belongs to the polydnaviridae I-Kappa-B-like protein family.

Functionally, suppresses the host immune response through NF-kappa-B inactivation. Possesses ankyrin repeat domains required for NF-kappa-B binding but lacks the regulatory regions required for dissociation from NF-kappa-B and degradation. Therefore, prevents host NF-kappa-B release and subsequent activation. This is I-Kappa-B like protein F1 (F2) from Microplitis demolitor bracovirus (isolate Webb) (MdBV).